The primary structure comprises 465 residues: ATP synthase subunit beta (465 aa).

ATP is bound at residue glycine 152–threonine 159.

This sequence belongs to the ATPase alpha/beta chains family. In terms of assembly, F-type ATPases have 2 components, CF(1) - the catalytic core - and CF(0) - the membrane proton channel. CF(1) has five subunits: alpha(3), beta(3), gamma(1), delta(1), epsilon(1). CF(0) has three main subunits: a(1), b(2) and c(9-12). The alpha and beta chains form an alternating ring which encloses part of the gamma chain. CF(1) is attached to CF(0) by a central stalk formed by the gamma and epsilon chains, while a peripheral stalk is formed by the delta and b chains.

Its subcellular location is the cell inner membrane. It carries out the reaction ATP + H2O + 4 H(+)(in) = ADP + phosphate + 5 H(+)(out). Produces ATP from ADP in the presence of a proton gradient across the membrane. The catalytic sites are hosted primarily by the beta subunits. The protein is ATP synthase subunit beta of Campylobacter concisus (strain 13826).